Consider the following 242-residue polypeptide: Probable 2-phosphosulfolactate phosphatase (242 aa).

Belongs to the ComB family. It depends on Mg(2+) as a cofactor.

It catalyses the reaction (2R)-O-phospho-3-sulfolactate + H2O = (2R)-3-sulfolactate + phosphate. This Picosynechococcus sp. (strain ATCC 27264 / PCC 7002 / PR-6) (Agmenellum quadruplicatum) protein is Probable 2-phosphosulfolactate phosphatase.